Consider the following 550-residue polypeptide: CTP synthase (550 aa).

An amidoligase domain region spans residues M1–M271. S13 contributes to the CTP binding site. UTP is bound at residue S13. Residue S14–L19 participates in ATP binding. An L-glutamine-binding site is contributed by Y54. Residue D71 coordinates ATP. Mg(2+) is bound by residues D71 and E145. CTP-binding positions include D152–E154, K192–Q197, and K228. UTP-binding positions include K192–Q197 and K228. The Glutamine amidotransferase type-1 domain occupies T297–L549. G361 serves as a coordination point for L-glutamine. Catalysis depends on C388, which acts as the Nucleophile; for glutamine hydrolysis. L-glutamine-binding positions include F389–Q392, E412, and R477. Catalysis depends on residues H522 and E524.

The protein belongs to the CTP synthase family. Homotetramer.

It catalyses the reaction UTP + L-glutamine + ATP + H2O = CTP + L-glutamate + ADP + phosphate + 2 H(+). It carries out the reaction L-glutamine + H2O = L-glutamate + NH4(+). The catalysed reaction is UTP + NH4(+) + ATP = CTP + ADP + phosphate + 2 H(+). The protein operates within pyrimidine metabolism; CTP biosynthesis via de novo pathway; CTP from UDP: step 2/2. Allosterically activated by GTP, when glutamine is the substrate; GTP has no effect on the reaction when ammonia is the substrate. The allosteric effector GTP functions by stabilizing the protein conformation that binds the tetrahedral intermediate(s) formed during glutamine hydrolysis. Inhibited by the product CTP, via allosteric rather than competitive inhibition. In terms of biological role, catalyzes the ATP-dependent amination of UTP to CTP with either L-glutamine or ammonia as the source of nitrogen. Regulates intracellular CTP levels through interactions with the four ribonucleotide triphosphates. The sequence is that of CTP synthase from Caulobacter vibrioides (strain ATCC 19089 / CIP 103742 / CB 15) (Caulobacter crescentus).